We begin with the raw amino-acid sequence, 300 residues long: UDP-N-acetylenolpyruvoylglucosamine reductase (300 aa).

The 165-residue stretch at 29–193 (TGGPADLLVF…LSATFKLRSG (165 aa)) folds into the FAD-binding PCMH-type domain. Residue R172 is part of the active site. The active-site Proton donor is the S222. E292 is a catalytic residue.

The protein belongs to the MurB family. The cofactor is FAD.

It localises to the cytoplasm. It carries out the reaction UDP-N-acetyl-alpha-D-muramate + NADP(+) = UDP-N-acetyl-3-O-(1-carboxyvinyl)-alpha-D-glucosamine + NADPH + H(+). Its pathway is cell wall biogenesis; peptidoglycan biosynthesis. Its function is as follows. Cell wall formation. The sequence is that of UDP-N-acetylenolpyruvoylglucosamine reductase from Pediococcus pentosaceus (strain ATCC 25745 / CCUG 21536 / LMG 10740 / 183-1w).